The sequence spans 282 residues: Probable endonuclease 4 (282 aa).

Residues H70, H110, E146, D180, H183, H217, D230, H232, and E262 each contribute to the Zn(2+) site.

Belongs to the AP endonuclease 2 family. Zn(2+) is required as a cofactor.

The enzyme catalyses Endonucleolytic cleavage to 5'-phosphooligonucleotide end-products.. Its function is as follows. Endonuclease IV plays a role in DNA repair. It cleaves phosphodiester bonds at apurinic or apyrimidinic (AP) sites, generating a 3'-hydroxyl group and a 5'-terminal sugar phosphate. The protein is Probable endonuclease 4 of Wolinella succinogenes (strain ATCC 29543 / DSM 1740 / CCUG 13145 / JCM 31913 / LMG 7466 / NCTC 11488 / FDC 602W) (Vibrio succinogenes).